An 84-amino-acid polypeptide reads, in one-letter code: Large ribosomal subunit protein bL31B (84 aa).

The protein belongs to the bacterial ribosomal protein bL31 family. Type B subfamily. In terms of assembly, part of the 50S ribosomal subunit.

This chain is Large ribosomal subunit protein bL31B, found in Rhodococcus opacus (strain B4).